The following is a 99-amino-acid chain: Cytochrome c-555 (99 aa).

Residues Cys-23, Cys-26, His-27, and Met-73 each coordinate heme c.

Binds 1 heme c group covalently per subunit.

The sequence is that of Cytochrome c-555 from Prosthecochloris aestuarii.